We begin with the raw amino-acid sequence, 279 residues long: Putative cysteine-rich repeat secretory protein 22 (279 aa).

The first 31 residues, 1–31, serve as a signal peptide directing secretion; sequence MSSSSASKLLGSVLVFAMISVQIVFIHCVMS. Gnk2-homologous domains are found at residues 44–146 and 152–276; these read YLHH…PINS and YEYN…LYRF.

The protein belongs to the cysteine-rich repeat secretory protein family.

It localises to the secreted. The polypeptide is Putative cysteine-rich repeat secretory protein 22 (CRRSP22) (Arabidopsis thaliana (Mouse-ear cress)).